A 231-amino-acid chain; its full sequence is Chromosome partition protein MukE (231 aa).

Positions 197–231 (RDGEAMPIEGGLSLDDSENDETSDNSAEGTGDEQP) are disordered.

The protein belongs to the MukE family. As to quaternary structure, interacts, and probably forms a ternary complex, with MukF and MukB. The complex formation is stimulated by calcium or magnesium.

The protein resides in the cytoplasm. Its subcellular location is the nucleoid. Functionally, involved in chromosome condensation, segregation and cell cycle progression. May participate in facilitating chromosome segregation by condensation DNA from both sides of a centrally located replisome during cell division. Probably acts via its interaction with MukB and MukF. The chain is Chromosome partition protein MukE from Photorhabdus laumondii subsp. laumondii (strain DSM 15139 / CIP 105565 / TT01) (Photorhabdus luminescens subsp. laumondii).